A 169-amino-acid chain; its full sequence is Mu-like prophage FluMu host-nuclease inhibitor protein gam (169 aa).

It to phage Mu protein gam.

In terms of biological role, protects linear double-stranded DNA of Mu genome from exonuclease degradation. In Haemophilus influenzae (strain ATCC 51907 / DSM 11121 / KW20 / Rd), this protein is Mu-like prophage FluMu host-nuclease inhibitor protein gam.